The sequence spans 374 residues: MSIEQLARKTVRELTPYQSARRLGGSGDIWLNANESPFANEYSVTCGRLNRYSECQPADLIQAYADYAGIDSKQVLTSRGADEGIELLIRTFCEPNQDSILYCPPTYGMYAISAETFDIKTKTVPLTPEWQLDLPSIQNNLDGVKLVFVCSPNNPTGNVMNRRDIEKLLDMTTDKALVVIDEAYIDFCLETSTVDLLAKYPHLVILRTLSKAFALAGLRCGFTLANTDVINLLLKVIAPYPVPVPVADIAVQALSVAGRARTKFQVLDISANRAYLQAGLGMLSGVTVYDGYGNYLLVKFTHADALFTALWNHGIILRRSPIENCIRISVGNRDECEKTLAFIRAHVTSQGNSSQDSASKSNSSANNDELNASN.

N6-(pyridoxal phosphate)lysine is present on Lys-211. Over residues 351 to 368 the composition is skewed to low complexity; it reads GNSSQDSASKSNSSANND. The interval 351–374 is disordered; it reads GNSSQDSASKSNSSANNDELNASN.

Belongs to the class-II pyridoxal-phosphate-dependent aminotransferase family. Histidinol-phosphate aminotransferase subfamily. In terms of assembly, homodimer. It depends on pyridoxal 5'-phosphate as a cofactor.

It carries out the reaction L-histidinol phosphate + 2-oxoglutarate = 3-(imidazol-4-yl)-2-oxopropyl phosphate + L-glutamate. The protein operates within amino-acid biosynthesis; L-histidine biosynthesis; L-histidine from 5-phospho-alpha-D-ribose 1-diphosphate: step 7/9. The sequence is that of Histidinol-phosphate aminotransferase from Photobacterium profundum (strain SS9).